The following is a 122-amino-acid chain: MLNTMLGNYFPILLFILVGLAIGVLSMLAGWLLAPNKPDAEKLSPYECGFGAFEDARMKFDVRYYLIAILFILFDLEIAFLFPWAVVLKEIGWFGFVAMLVFLGLLVVGFIYEWVKGALEWD.

A run of 3 helical transmembrane segments spans residues 12-32 (ILLF…AGWL), 67-87 (IAIL…WAVV), and 91-111 (IGWF…VGFI).

It belongs to the complex I subunit 3 family. In terms of assembly, NDH-1 is composed of 14 different subunits. Subunits NuoA, H, J, K, L, M, N constitute the membrane sector of the complex.

Its subcellular location is the cell inner membrane. It catalyses the reaction a quinone + NADH + 5 H(+)(in) = a quinol + NAD(+) + 4 H(+)(out). Its function is as follows. NDH-1 shuttles electrons from NADH, via FMN and iron-sulfur (Fe-S) centers, to quinones in the respiratory chain. The immediate electron acceptor for the enzyme in this species is believed to be ubiquinone. Couples the redox reaction to proton translocation (for every two electrons transferred, four hydrogen ions are translocated across the cytoplasmic membrane), and thus conserves the redox energy in a proton gradient. The polypeptide is NADH-quinone oxidoreductase subunit A (Nitrosomonas europaea (strain ATCC 19718 / CIP 103999 / KCTC 2705 / NBRC 14298)).